A 212-amino-acid chain; its full sequence is MIPLVALLVLLTLQASPGDIVSVNVTDTATLTVGDSCMYFVDNLQPSINATPGEYEVKIGINCTPGLKEVYADGSVLAQIDVNETTIDYQAYAASLEKENLALQKEVESLKEKLKISQEQIETLKSQLEDLQNKAKMLGIQNELQKQQIEELQKKLERAKTELQKKKSDLDELEEKIRELNRQSSIYRLATFFMVSLFVGSFVALVFVARKE.

Positions 1 to 18 are cleaved as a signal peptide; sequence MIPLVALLVLLTLQASPG. Residues 186 to 208 traverse the membrane as a helical segment; the sequence is IYRLATFFMVSLFVGSFVALVFV.

To A.fulgidus AF_0540.

The protein localises to the membrane. This is an uncharacterized protein from Archaeoglobus fulgidus (strain ATCC 49558 / DSM 4304 / JCM 9628 / NBRC 100126 / VC-16).